Reading from the N-terminus, the 881-residue chain is Low-affinity phosphate transporter PHO90 (881 aa).

Positions Met1–Glu288 constitute an SPX domain. 12 consecutive transmembrane segments (helical) span residues Ile417–Ala437, Ala456–Leu476, Ile493–Glu513, Val514–Cys534, Val539–Ala559, Ala581–Ile601, Phe663–Val683, Phe691–Leu711, Ala718–Ser738, Gly758–Ser778, Ile805–Phe825, and Ala854–Val874.

Belongs to the CitM (TC 2.A.11) transporter family.

It is found in the membrane. Its function is as follows. Low-affinity phosphate transporter involved in the control of cellular phosphate levels. This is Low-affinity phosphate transporter PHO90 (PHO90) from Saccharomyces cerevisiae (strain ATCC 204508 / S288c) (Baker's yeast).